The sequence spans 247 residues: Uridylate kinase (247 aa).

11 to 14 (KASG) serves as a coordination point for ATP. Positions 19–24 (GKQGFG) are involved in allosteric activation by GTP. A UMP-binding site is contributed by G53. Positions 54 and 58 each coordinate ATP. UMP-binding positions include D73 and 134-141 (TGNPFFTT). Residues T161, Q162, Y167, and D170 each coordinate ATP.

Belongs to the UMP kinase family. In terms of assembly, homohexamer.

The protein localises to the cytoplasm. It carries out the reaction UMP + ATP = UDP + ADP. It functions in the pathway pyrimidine metabolism; CTP biosynthesis via de novo pathway; UDP from UMP (UMPK route): step 1/1. With respect to regulation, allosterically activated by GTP. Inhibited by UTP. Its function is as follows. Catalyzes the reversible phosphorylation of UMP to UDP. The sequence is that of Uridylate kinase from Chelativorans sp. (strain BNC1).